We begin with the raw amino-acid sequence, 468 residues long: Chromosomal replication initiator protein DnaA (468 aa).

A domain I, interacts with DnaA modulators region spans residues 1 to 84 (MSSSLWLQCM…RFEVGSRPVA (84 aa)). The segment at 81–113 (RPVAAPKPAPTRTPADVAAESSAPAQLQARKPV) is disordered. Residues 84–131 (AAPKPAPTRTPADVAAESSAPAQLQARKPVHKTWDDDAQAIADINHRS) are domain II. Residues 132–348 (NVNPKHKFNN…GALNRVIANA (217 aa)) are domain III, AAA+ region. ATP-binding residues include glycine 176, glycine 178, lysine 179, and threonine 180. A domain IV, binds dsDNA region spans residues 349-468 (NFTGRPITID…YSNLIRTLSS (120 aa)).

This sequence belongs to the DnaA family. In terms of assembly, oligomerizes as a right-handed, spiral filament on DNA at oriC.

It is found in the cytoplasm. In terms of biological role, plays an essential role in the initiation and regulation of chromosomal replication. ATP-DnaA binds to the origin of replication (oriC) to initiate formation of the DNA replication initiation complex once per cell cycle. Binds the DnaA box (a 9 base pair repeat at the origin) and separates the double-stranded (ds)DNA. Forms a right-handed helical filament on oriC DNA; dsDNA binds to the exterior of the filament while single-stranded (ss)DNA is stabiized in the filament's interior. The ATP-DnaA-oriC complex binds and stabilizes one strand of the AT-rich DNA unwinding element (DUE), permitting loading of DNA polymerase. After initiation quickly degrades to an ADP-DnaA complex that is not apt for DNA replication. Binds acidic phospholipids. In Vibrio vulnificus (strain CMCP6), this protein is Chromosomal replication initiator protein DnaA.